Here is a 226-residue protein sequence, read N- to C-terminus: UPF0758 protein SAK_1186 (226 aa).

The MPN domain maps to 103–225 (QILSSEQLAR…YYSFREEADI (123 aa)). Residues H174, H176, and D187 each coordinate Zn(2+). The JAMM motif signature appears at 174-187 (HNHPSGSPKPSESD).

The protein belongs to the UPF0758 family.

The protein is UPF0758 protein SAK_1186 of Streptococcus agalactiae serotype Ia (strain ATCC 27591 / A909 / CDC SS700).